We begin with the raw amino-acid sequence, 336 residues long: Phenylalanine--tRNA ligase alpha subunit (336 aa).

Glutamate 251 is a binding site for Mg(2+).

Belongs to the class-II aminoacyl-tRNA synthetase family. Phe-tRNA synthetase alpha subunit type 1 subfamily. As to quaternary structure, tetramer of two alpha and two beta subunits. It depends on Mg(2+) as a cofactor.

It localises to the cytoplasm. It catalyses the reaction tRNA(Phe) + L-phenylalanine + ATP = L-phenylalanyl-tRNA(Phe) + AMP + diphosphate + H(+). This chain is Phenylalanine--tRNA ligase alpha subunit, found in Syntrophobacter fumaroxidans (strain DSM 10017 / MPOB).